The sequence spans 354 residues: MNEAIIQLDHIDITFRQKKRVIEAVKDVTVHINQGDIYGIVGYSGAGKSTLVRVINLLQAPTNGKITVDGDVTFDQGKVQLSANALRQKRRDIGMIFQHFNLMAQKTAKENVAFALRHSSLSKTEKEHKVIELLELVGLSERADNYPAQLSGGQKQRVAIARALANDPKILISDEATSALDPKTTKQILALLQELNRKLGLTIVMITHEMQIVKDICNRVAVMQNGVLIEEGSVLDIFSNPKEALTQEFITTATGIDEALEKINQQDIVKHLPANALLAQLKYAGTSTDEPLLNSIYRQFEVTANILYGNIEILDHIPVGDMIVVLEGQAENILAAEKALHEAGVDVSILKRGA.

In terms of domain architecture, ABC transporter spans 8-250; that stretch reads LDHIDITFRQ…PKEALTQEFI (243 aa). An ATP-binding site is contributed by 42 to 49; sequence GYSGAGKS.

Belongs to the ABC transporter superfamily. Methionine importer (TC 3.A.1.24) family. As to quaternary structure, the complex is composed of two ATP-binding proteins (MetN), two transmembrane proteins (MetI) and a solute-binding protein (MetQ).

The protein resides in the cell membrane. It catalyses the reaction L-methionine(out) + ATP + H2O = L-methionine(in) + ADP + phosphate + H(+). The enzyme catalyses D-methionine(out) + ATP + H2O = D-methionine(in) + ADP + phosphate + H(+). Functionally, part of the ABC transporter complex MetNIQ involved in methionine import. Responsible for energy coupling to the transport system. In Streptococcus pyogenes serotype M12 (strain MGAS2096), this protein is Methionine import ATP-binding protein MetN.